The following is a 105-amino-acid chain: Malonate decarboxylase acyl carrier protein (105 aa).

Serine 28 carries the post-translational modification O-(phosphoribosyl dephospho-coenzyme A)serine.

It belongs to the MdcC family. Covalently binds the prosthetic group of malonate decarboxylase.

It localises to the cytoplasm. Subunit of malonate decarboxylase, it is an acyl carrier protein to which acetyl and malonyl thioester residues are bound via a 2'-(5''-phosphoribosyl)-3'-dephospho-CoA prosthetic group and turn over during the catalytic mechanism. This Xanthomonas euvesicatoria pv. vesicatoria (strain 85-10) (Xanthomonas campestris pv. vesicatoria) protein is Malonate decarboxylase acyl carrier protein.